Consider the following 348-residue polypeptide: MKLTVFSAKPYDIEYLGGIATNQNSSPAIEINFLHVPLSSETAAFANGADAVCVFVHDVLDANVLRELYAAGVRAILFRCSGYNNIDLREAERLGFFVANVPSYSPEAVAEFAVALIQTLNRKTHRAYNRVRDGNFNLDGLLGRTLHGKTVGIVGSGRIGLAMAQIVQGFGCKLLAYDPRPTEAFKKYGEYVDLDTLLSQCDIVSLHCPLMDSTQHIINDTTVSKMKRGAMLVNTSRGGLIDTQSVMKALKSKRLGGLALDVYEGERALFYKDHSGDIIHDDLLMRLTTFHNVVVSGHQAYFTEEALTEIAECTLRNLDDWAKGVPTANALVQGRNSNGRRERGLARL.

Residues 158 to 159, aspartate 178, 208 to 209, 235 to 237, and aspartate 261 each bind NAD(+); these read RI, CP, and TSR. Arginine 237 is a catalytic residue. Residue glutamate 266 is part of the active site. The Proton donor role is filled by histidine 298.

This sequence belongs to the D-isomer specific 2-hydroxyacid dehydrogenase family.

The protein operates within secondary metabolite biosynthesis. Functionally, D-lactate dehydrogenase; part of the gene cluster that mediates the biosynthesis of KK-1, a novel cyclic depsipeptide with 10 residues which is a promising active compound with high activity against many plant pathogens, especially Botrytis cinerea. Within the pathway, kk1H catalyzes in the synthesis of D-lactic acid from pyruvic acid, which is recognized by the A domain of the first kk1B module. The nonribosomal peptide synthetase (NRPS) kk1B catalyzes the elongation and cyclization of the decapeptide chain composed of 1 D-lactic acid residue (D-Lac), 1 pipecolic acid residue (Pip), 1 aspartic acid residue (Asp), 1 isoleucine residue (Ile), 1 glycine residue (Gly), 1 tyrosine residue (Tyr) and 4 valine residues (Val). The Asp, Ile and 3 Val residues are N-methylated by the 5 methyltransferase domains from the NRPS (found in modules 3, 5, 6, 7 and 9), whereas the Tyr residue is O-methylated by the cluster encoded O-methyltransferase kk1A. The thioesterase kk1J is likely to be involved in the corrective mechanism of peptide chain synthesis. The D-lactate dehydrogenase kk1H is involved in the synthesis of D-lactic acid from pyruvic acid, which is recognized by the A domain of the first kk1B module. The pyrroline-5-carboxylate reductase kk1I is involved in the synthesis of the L-pipecolic acid residue of KK-1 from delta-1-pyrroline-5-carboxylate (P5C), a metabolic intermediate of lysine. It still is unclear how kk1C and kk1D are involved in the production of KK-1. The sequence is that of D-lactate dehydrogenase kk1H from Curvularia clavata.